A 310-amino-acid polypeptide reads, in one-letter code: Apolipoprotein E (310 aa).

The N-terminal stretch at 1–18 (MKVLWPALVVTLLAGCRA) is a signal peptide. Tandem repeats lie at residues 77–98 (ALMD…EQLG), 99–120 (PVAE…ARLG), 121–142 (ADME…AMVG), 143–164 (QSTE…KRLL), 165–186 (RDAE…EGAE), 187–208 (RSVN…TMHT), 209–226 (LVSK…QRLR), and 227–248 (GRLE…EQVQ). Residues 77–248 (ALMDDTMKEV…RLDEVREQVQ (172 aa)) are 8 X 22 AA approximate tandem repeats. Residues 155–165 (HLRKLRKRLLR) are LDL and other lipoprotein receptors binding. 159 to 162 (LRKR) is a heparin binding site. The lipid-binding and lipoprotein association stretch occupies residues 207-283 (HTLVSKPLQE…SWFEPLVQDM (77 aa)). 222–229 (AQRLRGRL) contributes to the heparin binding site. The interval 259–310 (NQVRLQAEAFQGRLKSWFEPLVQDMQQKWAELVEKVQLALRAVPTSVPSEKQ) is homooligomerization. Residues 271 to 283 (RLKSWFEPLVQDM) form a specificity for association with VLDL region.

The protein belongs to the apolipoprotein A1/A4/E family. In terms of assembly, homotetramer. May interact with ABCA1; functionally associated with ABCA1 in the biogenesis of HDLs. May interact with APP/A4 amyloid-beta peptide; the interaction is extremely stable in vitro but its physiological significance is unclear. May interact with MAPT. May interact with MAP2. In the cerebrospinal fluid, interacts with secreted SORL1. Interacts with PMEL; this allows the loading of PMEL luminal fragment on ILVs to induce fibril nucleation. APOE exists as multiple glycosylated and sialylated glycoforms within cells and in plasma. The extent of glycosylation and sialylation are tissue and context specific. Post-translationally, glycated in plasma VLDL. In terms of processing, phosphorylated by FAM20C in the extracellular medium.

It localises to the secreted. Its subcellular location is the extracellular space. The protein localises to the extracellular matrix. The protein resides in the extracellular vesicle. It is found in the endosome. It localises to the multivesicular body. Functionally, APOE is an apolipoprotein, a protein associating with lipid particles, that mainly functions in lipoprotein-mediated lipid transport between organs via the plasma and interstitial fluids. APOE is a core component of plasma lipoproteins and is involved in their production, conversion and clearance. Apolipoproteins are amphipathic molecules that interact both with lipids of the lipoprotein particle core and the aqueous environment of the plasma. As such, APOE associates with chylomicrons, chylomicron remnants, very low density lipoproteins (VLDL) and intermediate density lipoproteins (IDL) but shows a preferential binding to high-density lipoproteins (HDL). It also binds a wide range of cellular receptors including the LDL receptor/LDLR and the very low-density lipoprotein receptor/VLDLR that mediate the cellular uptake of the APOE-containing lipoprotein particles. Finally, APOE also has a heparin-binding activity and binds heparan-sulfate proteoglycans on the surface of cells, a property that supports the capture and the receptor-mediated uptake of APOE-containing lipoproteins by cells. This chain is Apolipoprotein E (APOE), found in Dicerorhinus sumatrensis harrissoni (Bornean rhinoceros).